The primary structure comprises 226 residues: Guanylate kinase (226 aa).

The region spanning 13-193 is the Guanylate kinase-like domain; the sequence is GLLLVLSAPS…ALAQLQAIVR (181 aa). An ATP-binding site is contributed by 20–27; that stretch reads APSGAGKT.

This sequence belongs to the guanylate kinase family.

The protein resides in the cytoplasm. The enzyme catalyses GMP + ATP = GDP + ADP. Its function is as follows. Essential for recycling GMP and indirectly, cGMP. The protein is Guanylate kinase of Anaeromyxobacter dehalogenans (strain 2CP-C).